Consider the following 78-residue polypeptide: D-alanyl carrier protein (78 aa).

The region spanning 1 to 78 (MEFKNQVYGI…HIAEQLAEMK (78 aa)) is the Carrier domain. Position 36 is an O-(pantetheine 4'-phosphoryl)serine (Ser36).

Belongs to the DltC family. 4'-phosphopantetheine is transferred from CoA to a specific serine of apo-DCP.

It is found in the cytoplasm. It participates in cell wall biogenesis; lipoteichoic acid biosynthesis. Its function is as follows. Carrier protein involved in the D-alanylation of lipoteichoic acid (LTA). The loading of thioester-linked D-alanine onto DltC is catalyzed by D-alanine--D-alanyl carrier protein ligase DltA. The DltC-carried D-alanyl group is further transferred to cell membrane phosphatidylglycerol (PG) by forming an ester bond, probably catalyzed by DltD. D-alanylation of LTA plays an important role in modulating the properties of the cell wall in Gram-positive bacteria, influencing the net charge of the cell wall. The polypeptide is D-alanyl carrier protein (Bacillus pumilus (strain SAFR-032)).